The following is a 429-amino-acid chain: Enolase (429 aa).

Residue glutamine 163 coordinates (2R)-2-phosphoglycerate. Glutamate 205 (proton donor) is an active-site residue. Aspartate 242, glutamate 287, and aspartate 314 together coordinate Mg(2+). (2R)-2-phosphoglycerate is bound by residues lysine 339, arginine 368, serine 369, and lysine 390. Lysine 339 functions as the Proton acceptor in the catalytic mechanism.

The protein belongs to the enolase family. Requires Mg(2+) as cofactor.

The protein localises to the cytoplasm. It is found in the secreted. It localises to the cell surface. It carries out the reaction (2R)-2-phosphoglycerate = phosphoenolpyruvate + H2O. It participates in carbohydrate degradation; glycolysis; pyruvate from D-glyceraldehyde 3-phosphate: step 4/5. Functionally, catalyzes the reversible conversion of 2-phosphoglycerate (2-PG) into phosphoenolpyruvate (PEP). It is essential for the degradation of carbohydrates via glycolysis. The protein is Enolase of Anaeromyxobacter dehalogenans (strain 2CP-1 / ATCC BAA-258).